The primary structure comprises 129 residues: Histone H2B.2 (129 aa).

Basic and acidic residues predominate over residues 1–19 (MAPKAEKKPASKAPAEKKP). The segment at 1 to 38 (MAPKAEKKPASKAPAEKKPAAKKTATSGTKKRSKTRKE) is disordered. An N6-acetyllysine; alternate mark is found at lysine 7 and lysine 8. Residues lysine 7 and lysine 8 each participate in a glycyl lysine isopeptide (Lys-Gly) (interchain with G-Cter in SUMO); alternate cross-link. Phosphoserine is present on serine 11. Position 12 is an N6-acetyllysine (lysine 12). Lysine 17 is subject to N6-acetyllysine; alternate. Residue lysine 17 forms a Glycyl lysine isopeptide (Lys-Gly) (interchain with G-Cter in SUMO); alternate linkage. Residue lysine 18 forms a Glycyl lysine isopeptide (Lys-Gly) (interchain with G-Cter in SUMO) linkage. Lysine 123 is covalently cross-linked (Glycyl lysine isopeptide (Lys-Gly) (interchain with G-Cter in ubiquitin)).

Belongs to the histone H2B family. As to quaternary structure, the nucleosome is a histone octamer containing two molecules each of H2A, H2B, H3 and H4 assembled in one H3-H4 heterotetramer and two H2A-H2B heterodimers. The octamer wraps approximately 147 bp of DNA. In terms of processing, monoubiquitinated by the UBC2-BRE1 complex to form H2BK123ub1. H2BK123ub1 gives a specific tag for epigenetic transcriptional activation and is also prerequisite for H3K4me and H3K79me formation. H2BK123ub1 also modulates the formation of double-strand breaks during meiosis and is a prerequisite for DNA-damage checkpoint activation. Phosphorylated by STE20 to form H2BS10ph during progression through meiotic prophase. May be correlated with chromosome condensation. Post-translationally, acetylated by GCN5 to form H2BK11ac and H2BK16ac. H2BK16ac can also be formed by ESA1. Acetylation of N-terminal lysines and particularly formation of H2BK11acK16ac has a positive effect on transcription. In terms of processing, sumoylation to form H2BK6su or H2BK7su, and probably also H2BK16su or H2BK17su, occurs preferentially near the telomeres and represses gene transcription.

It localises to the nucleus. It is found in the chromosome. In terms of biological role, core component of nucleosome. Nucleosomes wrap and compact DNA into chromatin, limiting DNA accessibility to the cellular machineries which require DNA as a template. Histones thereby play a central role in transcription regulation, DNA repair, DNA replication and chromosomal stability. DNA accessibility is regulated via a complex set of post-translational modifications of histones, also called histone code, and nucleosome remodeling. In Debaryomyces hansenii (strain ATCC 36239 / CBS 767 / BCRC 21394 / JCM 1990 / NBRC 0083 / IGC 2968) (Yeast), this protein is Histone H2B.2 (HTB2).